The chain runs to 205 residues: Inactive ribonuclease-like protein 9 (205 aa).

The N-terminal stretch at 1–26 (MMRTLITIHPLPLLLLLQQLLQPVQF) is a signal peptide. 3 cysteine pairs are disulfide-bonded: cysteine 98–cysteine 153, cysteine 116–cysteine 168, and cysteine 123–cysteine 130. Residues asparagine 131 and asparagine 143 are each glycosylated (N-linked (GlcNAc...) asparagine).

It belongs to the pancreatic ribonuclease family.

It localises to the secreted. Does not exhibit any ribonuclease activity. This chain is Inactive ribonuclease-like protein 9 (RNASE9), found in Gorilla gorilla gorilla (Western lowland gorilla).